The following is a 482-amino-acid chain: High affinity 3',5'-cyclic-AMP phosphodiesterase 7A (482 aa).

A Phosphoserine modification is found at Ser84. Residues 136 to 458 form the PDEase domain; it reads LDDDYNGQAK…ASWKGLQREQ (323 aa). His212 serves as the catalytic Proton donor. His216, His252, Asp253, and Asp362 together coordinate a divalent metal cation.

Belongs to the cyclic nucleotide phosphodiesterase family. PDE7 subfamily. As to quaternary structure, interacts with CBFA2T3. A divalent metal cation serves as cofactor. In terms of tissue distribution, found at high levels in skeletal muscle and at low levels in a variety of tissues including brain and heart. It is expressed as well in two T-cell lines. Found abundantly in skeletal muscle and at low levels in heart.

It localises to the cytoplasm. It is found in the cytosol. It catalyses the reaction 3',5'-cyclic AMP + H2O = AMP + H(+). The protein operates within purine metabolism; 3',5'-cyclic AMP degradation; AMP from 3',5'-cyclic AMP: step 1/1. Its activity is regulated as follows. Insensitive to all selective PDE inhibitors. In terms of biological role, hydrolyzes the second messenger cAMP, which is a key regulator of many important physiological processes. May have a role in muscle signal transduction. The protein is High affinity 3',5'-cyclic-AMP phosphodiesterase 7A of Homo sapiens (Human).